Here is a 217-residue protein sequence, read N- to C-terminus: Oxygen regulatory protein NreC (217 aa).

The Response regulatory domain occupies 2–119; it reads KIVIADDHAV…QLLLAIRTVY (118 aa). A 4-aspartylphosphate modification is found at Asp-53. Positions 148 to 213 constitute an HTH luxR-type domain; it reads TSDPFKILSK…ELVEYALKKK (66 aa). A DNA-binding region (H-T-H motif) is located at residues 172–191; that stretch reads NKEIAEKLFVSVKTVEAHKT.

In terms of processing, phosphorylated by NreB.

It is found in the cytoplasm. In terms of biological role, member of the two-component regulatory system NreB/NreC involved in the control of dissimilatory nitrate/nitrite reduction in response to oxygen. Phosphorylated NreC binds to a GC-rich palindromic sequence at the promoters of the nitrate (narGHJI) and nitrite (nir) reductase operons, as well as the putative nitrate transporter gene narT, and activates their expression. This is Oxygen regulatory protein NreC (nreC) from Staphylococcus aureus (strain bovine RF122 / ET3-1).